Consider the following 307-residue polypeptide: Small ribosomal subunit biogenesis GTPase RsgA (307 aa).

In terms of domain architecture, CP-type G spans R85–F242. GTP-binding positions include N135–D138 and G184–T192. Zn(2+)-binding residues include C266, C271, H273, and C279.

This sequence belongs to the TRAFAC class YlqF/YawG GTPase family. RsgA subfamily. As to quaternary structure, monomer. Associates with 30S ribosomal subunit, binds 16S rRNA. Zn(2+) serves as cofactor.

It is found in the cytoplasm. One of several proteins that assist in the late maturation steps of the functional core of the 30S ribosomal subunit. Helps release RbfA from mature subunits. May play a role in the assembly of ribosomal proteins into the subunit. Circularly permuted GTPase that catalyzes slow GTP hydrolysis, GTPase activity is stimulated by the 30S ribosomal subunit. The chain is Small ribosomal subunit biogenesis GTPase RsgA from Neisseria meningitidis serogroup C (strain 053442).